Here is a 95-residue protein sequence, read N- to C-terminus: MALERSDVEKIAHLARLGLNDADIPRTTEALNSILGLVDQMQAVDTTGIEPLAHPLEATQRLREDAVTERNRRDTYQAIAPAVQDGLYLVPKVIE.

The protein belongs to the GatC family. In terms of assembly, heterotrimer of A, B and C subunits.

The enzyme catalyses L-glutamyl-tRNA(Gln) + L-glutamine + ATP + H2O = L-glutaminyl-tRNA(Gln) + L-glutamate + ADP + phosphate + H(+). It carries out the reaction L-aspartyl-tRNA(Asn) + L-glutamine + ATP + H2O = L-asparaginyl-tRNA(Asn) + L-glutamate + ADP + phosphate + 2 H(+). Its function is as follows. Allows the formation of correctly charged Asn-tRNA(Asn) or Gln-tRNA(Gln) through the transamidation of misacylated Asp-tRNA(Asn) or Glu-tRNA(Gln) in organisms which lack either or both of asparaginyl-tRNA or glutaminyl-tRNA synthetases. The reaction takes place in the presence of glutamine and ATP through an activated phospho-Asp-tRNA(Asn) or phospho-Glu-tRNA(Gln). The protein is Aspartyl/glutamyl-tRNA(Asn/Gln) amidotransferase subunit C of Pseudomonas syringae pv. syringae (strain B728a).